Consider the following 161-residue polypeptide: MSTDLCPVYAPFFGVMGCTAAIVFASFGAAYGTAKAGVGISAMGVLRPDLIVKNTIPVVMAGIIAIYGLVVSVLISGNLKQILSLYSGFIQLGAGLSVGLAGLAAGFAIGIVGDAGVRGTAQQPRLFVAMILILIFAEVLGLYGLIVALLLNTRATDNVTC.

Over 1 to 9 (MSTDLCPVY) the chain is Lumenal. A helical membrane pass occupies residues 10 to 32 (APFFGVMGCTAAIVFASFGAAYG). Residues 33-54 (TAKAGVGISAMGVLRPDLIVKN) lie on the Cytoplasmic side of the membrane. The chain crosses the membrane as a helical span at residues 55-75 (TIPVVMAGIIAIYGLVVSVLI). Residues 76 to 91 (SGNLKQILSLYSGFIQ) are Lumenal-facing. A helical membrane pass occupies residues 92–113 (LGAGLSVGLAGLAAGFAIGIVG). Topologically, residues 114 to 125 (DAGVRGTAQQPR) are cytoplasmic. A helical transmembrane segment spans residues 126–151 (LFVAMILILIFAEVLGLYGLIVALLL). At 152–161 (NTRATDNVTC) the chain is on the lumenal side.

This sequence belongs to the V-ATPase proteolipid subunit family. In terms of assembly, V-ATPase is a heteromultimeric enzyme composed of a peripheral catalytic V1 complex (components A to H) attached to an integral membrane V0 proton pore complex (components: a, c, c', c'', d, e, f and VOA1). The decameric c-ring forms the proton-conducting pore, and is composed of eight proteolipid subunits c, one subunit c' and one subunit c''.

It localises to the vacuole membrane. In terms of biological role, proton-conducting pore forming subunit of the V0 complex of vacuolar(H+)-ATPase (V-ATPase), a multisubunit enzyme composed of a peripheral complex (V1) that hydrolyzes ATP and a membrane integral complex (V0) that translocates protons. V-ATPase is responsible for acidifying and maintaining the pH of intracellular compartments. This is V-type proton ATPase subunit c from Schizosaccharomyces pombe (strain 972 / ATCC 24843) (Fission yeast).